The following is a 1408-amino-acid chain: ABC transporter B family member 20 (1408 aa).

Residues 14–49 (HMQPLTPVSEVSEPPESPSPYLDPGAESGGGTGTAA) are disordered. Positions 20–39 (PVSEVSEPPESPSPYLDPGA) are enriched in low complexity. The helical transmembrane segment at 86–106 (VLMIVGSVAAAAHGTALIVYL) threads the bilayer. In terms of domain architecture, ABC transmembrane type-1 1 spans 88-381 (MIVGSVAAAA…AATNFYSFDQ (294 aa)). Asn-120 carries an N-linked (GlcNAc...) asparagine glycan. The next 3 membrane-spanning stretches (helical) occupy residues 141 to 161 (IVYIAGGVFISGWIEVSCWIL), 214 to 233 (VGNYIHNMATFISGLVIGFV), and 238 to 260 (IALITLATGPFIVAAGGISNIFL). Residue Asn-293 is glycosylated (N-linked (GlcNAc...) asparagine). 2 consecutive transmembrane segments (helical) span residues 312–332 (GILISLVQGLGLGFTYGLAIC) and 353–373 (GEIIAALFAVILSGLGLNQAA). In terms of domain architecture, ABC transporter 1 spans 414–649 (IEFRNVYFSY…GGLYAELLKC (236 aa)). 449-456 (GRNGSGKS) lines the ATP pocket. Residue Asn-451 is glycosylated (N-linked (GlcNAc...) asparagine). Disordered regions lie at residues 676 to 735 (SSAG…SLDC) and 752 to 816 (LPHL…DAQH). Residues 762–771 (CPQQKSNGSE) are compositionally biased toward polar residues. N-linked (GlcNAc...) asparagine glycosylation occurs at Asn-768. Residues 802–816 (DDTKANGKASKDAQH) show a composition bias toward basic and acidic residues. One can recognise an ABC transmembrane type-1 2 domain in the interval 836–1124 (AVLGSLGAAI…PFGLAPYILK (289 aa)). Transmembrane regions (helical) follow at residues 841-861 (LGAAIFGSFNPLLAYVIALVV), 881-901 (LIIACMGIVTVVANFLQHFYF), 959-979 (IFIQDSFAVIVALLIGLLLGW), 983-1003 (LVALATLPILTLSAIAQKLWL), 1062-1082 (IGFAFGFSQFLLFACNALLLW), and 1103-1123 (MVFSFATFALVEPFGLAPYIL). An ABC transporter 2 domain is found at 1159 to 1396 (IELKNVDFCY…NGLYVRLMQP (238 aa)). Asn-1179 carries an N-linked (GlcNAc...) asparagine glycan. 1194–1201 (GVSGSGKS) lines the ATP pocket. Asn-1261 and Asn-1347 each carry an N-linked (GlcNAc...) asparagine glycan.

The protein belongs to the ABC transporter superfamily. ABCB family. Multidrug resistance exporter (TC 3.A.1.201) subfamily. As to expression, expressed in aerial tissues.

It localises to the membrane. The catalysed reaction is (indol-3-yl)acetate(in) + ATP + H2O = (indol-3-yl)acetate(out) + ADP + phosphate + H(+). In terms of biological role, probable auxin efflux transporter that contributes, together with ABCB6 and in a FKBP42/TWD1-dependent manner, to the regulation of leaf position and morphology, internode distribution, roots development, and inflorescence organization, probably by modulating auxin repartition. The chain is ABC transporter B family member 20 from Arabidopsis thaliana (Mouse-ear cress).